The sequence spans 582 residues: Protein NARROW LEAF 1 (582 aa).

2 disordered regions span residues Met1–Gln26 and Gly531–Lys582. Residues Leu562–Ser572 show a composition bias toward basic and acidic residues. The Nuclear localization signal motif lies at Pro567 to Asp573. Residues Asp573 to Lys582 are compositionally biased toward low complexity.

As to expression, expressed in leaf sheaths, leaf blades, culms and panicles. Preferentially expressed in vascular tissues in leaves and culms.

The protein localises to the nucleus. Its subcellular location is the nucleoplasm. The protein resides in the cytoplasm. In terms of biological role, involved in the regulation of lateral leaf growth. May be involved in the regulation of basipetal polar auxin transport (PAT) and vascular patterning in leaves. Controls photosynthesis rate by regulating carboxylation efficiency and consequently photosynthesis rate. Controls panicle and spikelet numbers, and grain yield. This Oryza sativa subsp. japonica (Rice) protein is Protein NARROW LEAF 1.